Reading from the N-terminus, the 220-residue chain is Uracil-DNA glycosylase (220 aa).

Asp-60 serves as the catalytic Proton acceptor.

This sequence belongs to the uracil-DNA glycosylase (UDG) superfamily. UNG family.

It localises to the cytoplasm. It catalyses the reaction Hydrolyzes single-stranded DNA or mismatched double-stranded DNA and polynucleotides, releasing free uracil.. In terms of biological role, excises uracil residues from the DNA which can arise as a result of misincorporation of dUMP residues by DNA polymerase or due to deamination of cytosine. This Francisella tularensis subsp. tularensis (strain FSC 198) protein is Uracil-DNA glycosylase.